The sequence spans 245 residues: DNA terminal protein (245 aa).

The Nuclear localization signal signature appears at 4–55; it reads KRLKKKLETKRKKSLLVSEGYSKKETKKLKGRELETVYKKKAHNRKNRERAR. Tyr194 bears the O-(5'-phospho-DNA)-tyrosine mark.

Interacts with the DNA-binding protein P1.

The protein localises to the virion. Functionally, acts as a primer for viral genomic replication. DNA terminal protein is covalently linked to the 5'-ends of both strands of the genome through a phosphodiester bond between the beta-hydroxyl group of a tyrosine residue and the 5'-phosphate of the terminal deoxythymidylate. This protein is essential for DNA replication and is involved in the priming of DNA elongation. The protein is DNA terminal protein of Bacillus thuringiensis (Bacillus thuringiensis bacteriophage Bam35c).